Reading from the N-terminus, the 728-residue chain is Elongation factor 2 (728 aa).

The 243-residue stretch at 19–261 (EQIRNIAIAA…MVAEHFPNPI (243 aa)) folds into the tr-type G domain. GTP is bound by residues 28–35 (AHVDHGKT), 94–98 (DTPGH), and 148–151 (NKVD). The residue at position 596 (His-596) is a Diphthamide.

It belongs to the TRAFAC class translation factor GTPase superfamily. Classic translation factor GTPase family. EF-G/EF-2 subfamily.

Its subcellular location is the cytoplasm. In terms of biological role, catalyzes the GTP-dependent ribosomal translocation step during translation elongation. During this step, the ribosome changes from the pre-translocational (PRE) to the post-translocational (POST) state as the newly formed A-site-bound peptidyl-tRNA and P-site-bound deacylated tRNA move to the P and E sites, respectively. Catalyzes the coordinated movement of the two tRNA molecules, the mRNA and conformational changes in the ribosome. The polypeptide is Elongation factor 2 (Halobacterium salinarum (strain ATCC 29341 / DSM 671 / R1)).